Reading from the N-terminus, the 114-residue chain is Ribonuclease P protein component (114 aa).

The protein belongs to the RnpA family. As to quaternary structure, consists of a catalytic RNA component (M1 or rnpB) and a protein subunit.

It catalyses the reaction Endonucleolytic cleavage of RNA, removing 5'-extranucleotides from tRNA precursor.. In terms of biological role, RNaseP catalyzes the removal of the 5'-leader sequence from pre-tRNA to produce the mature 5'-terminus. It can also cleave other RNA substrates such as 4.5S RNA. The protein component plays an auxiliary but essential role in vivo by binding to the 5'-leader sequence and broadening the substrate specificity of the ribozyme. This Exiguobacterium sp. (strain ATCC BAA-1283 / AT1b) protein is Ribonuclease P protein component.